Here is a 238-residue protein sequence, read N- to C-terminus: Testis-specific gene A8 protein (238 aa).

The disordered stretch occupies residues 35–238; the sequence is GKGAKTNKRG…GEAVATTTMT (204 aa). Residues 39 to 48 are compositionally biased toward basic residues; sequence KTNKRGKRGG. A run of 8 repeats spans residues 79–93, 94–108, 109–123, 124–138, 153–158, 171–176, 180–185, and 189–194. Positions 79–148 are 4 X 15 AA tandem repeats of A-A-A-A-A-P-E-A-A-A-S-[PL]-E-S-S; that stretch reads AAAAAPEAAA…AAAAAPEAAA (70 aa). 2 stretches are compositionally biased toward low complexity: residues 79–200 and 208–220; these read AAAA…AAPA and WEAA…AAVK. The tract at residues 153-194 is 4 X 6 AA repeats of P-A-A-P-E-A; it reads PAAPEAAAAPEVAAAPATPAAPEATAAPAAPEAATTPAAPEA.

As to expression, specifically expressed in testis (at protein level).

The protein localises to the cytoplasm. It is found in the nucleus. Its subcellular location is the nucleoplasm. In Mus musculus (Mouse), this protein is Testis-specific gene A8 protein.